Reading from the N-terminus, the 739-residue chain is Disintegrin and metalloproteinase domain-containing protein 18 (739 aa).

The N-terminal stretch at methionine 1–alanine 16 is a signal peptide. Residues histidine 17–glutamine 184 constitute a propeptide that is removed on maturation. Residues asparagine 36, asparagine 76, asparagine 122, asparagine 149, asparagine 156, asparagine 177, and asparagine 294 are each glycosylated (N-linked (GlcNAc...) asparagine). The Extracellular portion of the chain corresponds to asparagine 177–asparagine 687. Residues glutamine 184–serine 381 enclose the Peptidase M12B domain. 4 cysteine pairs are disulfide-bonded: cysteine 293–cysteine 376, cysteine 335–cysteine 360, cysteine 337–cysteine 342, and cysteine 450–cysteine 471. 5 N-linked (GlcNAc...) asparagine glycosylation sites follow: asparagine 359, asparagine 465, asparagine 561, asparagine 611, and asparagine 625. One can recognise a Disintegrin domain in the interval glutamine 390–asparagine 479. The region spanning methionine 620–lysine 654 is the EGF-like domain. Disulfide bonds link cysteine 624-cysteine 636, cysteine 630-cysteine 642, and cysteine 644-cysteine 653. Residues tryptophan 688 to phenylalanine 708 traverse the membrane as a helical segment. The Cytoplasmic portion of the chain corresponds to lysine 709–histidine 739.

Post-translationally, the prodomain and the metalloprotease-like domain are cleaved during the epididymal maturation of the spermatozoa. In terms of tissue distribution, expressed specifically in testis.

It is found in the membrane. In terms of biological role, sperm surface membrane protein that may be involved in spermatogenesis and fertilization. This is a non catalytic metalloprotease-like protein. This Homo sapiens (Human) protein is Disintegrin and metalloproteinase domain-containing protein 18 (ADAM18).